The following is an 856-amino-acid chain: Valine--tRNA ligase (856 aa).

A 'HIGH' region motif is present at residues Pro-47–His-57. Positions Lys-578–Ser-582 match the 'KMSKS' region motif. Lys-581 is an ATP binding site.

This sequence belongs to the class-I aminoacyl-tRNA synthetase family. ValS type 2 subfamily. As to quaternary structure, monomer.

The protein localises to the cytoplasm. The enzyme catalyses tRNA(Val) + L-valine + ATP = L-valyl-tRNA(Val) + AMP + diphosphate. Functionally, catalyzes the attachment of valine to tRNA(Val). As ValRS can inadvertently accommodate and process structurally similar amino acids such as threonine, to avoid such errors, it has a 'posttransfer' editing activity that hydrolyzes mischarged Thr-tRNA(Val) in a tRNA-dependent manner. This chain is Valine--tRNA ligase, found in Tropheryma whipplei (strain Twist) (Whipple's bacillus).